A 335-amino-acid chain; its full sequence is 4-hydroxythreonine-4-phosphate dehydrogenase (335 aa).

Threonine 132 serves as a coordination point for substrate. Histidine 163, histidine 208, and histidine 263 together coordinate a divalent metal cation. 3 residues coordinate substrate: lysine 271, asparagine 280, and arginine 289.

Belongs to the PdxA family. Homodimer. Zn(2+) is required as a cofactor. The cofactor is Mg(2+). It depends on Co(2+) as a cofactor.

The protein localises to the cytoplasm. It carries out the reaction 4-(phosphooxy)-L-threonine + NAD(+) = 3-amino-2-oxopropyl phosphate + CO2 + NADH. The protein operates within cofactor biosynthesis; pyridoxine 5'-phosphate biosynthesis; pyridoxine 5'-phosphate from D-erythrose 4-phosphate: step 4/5. Its function is as follows. Catalyzes the NAD(P)-dependent oxidation of 4-(phosphooxy)-L-threonine (HTP) into 2-amino-3-oxo-4-(phosphooxy)butyric acid which spontaneously decarboxylates to form 3-amino-2-oxopropyl phosphate (AHAP). This chain is 4-hydroxythreonine-4-phosphate dehydrogenase, found in Zymomonas mobilis subsp. mobilis (strain ATCC 31821 / ZM4 / CP4).